A 430-amino-acid polypeptide reads, in one-letter code: MIFTTSKNSSFKAEFKELLERGKMDIAHVSATVGTIIDEIKSNKNQALKEHITKFDKWTPVSDEDLKISTESMSRAYENLDKALKAALHLSYDRIKAYHEKQKPRSWFDDEPNGTILGQRVTPVDSAGLYIPGGKAAYPSSLLMNVIPAQVAGVQNIVVCTPTPENEPNELLLAACHLCGVSEVYKVGGASAIAAMAYGTETIPKVDVITGPGNIFVATAKKMVFGDVNIDMIAGPSEIGILADDSANPSHMAVDMLSQAEHDEMASSILITPSQKLADAIKAEIENWLKILPRQKIARESIEKRGAIIVTSDMQEAIDLMNEIAPEHLEVATLSPFELLPLIKHAGAIFLGHNTPEAVGDYMAGPNHTLPTGGTAKFFSPLGVENFMKKTSIISFSAKAINEIGEECALIAKIEGLTAHEQSIRVRLVK.

The substrate site is built by serine 237, glutamine 259, and histidine 262. Glutamine 259 and histidine 262 together coordinate Zn(2+). Residues glutamate 327 and histidine 328 each act as proton acceptor in the active site. The substrate site is built by histidine 328, aspartate 361, glutamate 415, and histidine 420. Aspartate 361 contributes to the Zn(2+) binding site. Zn(2+) is bound at residue histidine 420.

The protein belongs to the histidinol dehydrogenase family. Zn(2+) is required as a cofactor.

It catalyses the reaction L-histidinol + 2 NAD(+) + H2O = L-histidine + 2 NADH + 3 H(+). Its pathway is amino-acid biosynthesis; L-histidine biosynthesis; L-histidine from 5-phospho-alpha-D-ribose 1-diphosphate: step 9/9. Functionally, catalyzes the sequential NAD-dependent oxidations of L-histidinol to L-histidinaldehyde and then to L-histidine. The chain is Histidinol dehydrogenase from Sulfurimonas denitrificans (strain ATCC 33889 / DSM 1251) (Thiomicrospira denitrificans (strain ATCC 33889 / DSM 1251)).